We begin with the raw amino-acid sequence, 348 residues long: NADH-quinone oxidoreductase subunit H (348 aa).

8 helical membrane passes run 10–30 (LPLF…LVLI), 82–102 (GVFL…WAVV), 115–135 (VGLL…IMGG), 161–181 (IGFV…TTIV), 199–219 (LLDW…ISAL), 251–271 (LFFL…TILF), 287–307 (VPGV…FAMV), and 322–342 (LGWK…AAIL).

It belongs to the complex I subunit 1 family. NDH-1 is composed of 14 different subunits. Subunits NuoA, H, J, K, L, M, N constitute the membrane sector of the complex.

The protein resides in the cell inner membrane. It carries out the reaction a quinone + NADH + 5 H(+)(in) = a quinol + NAD(+) + 4 H(+)(out). In terms of biological role, NDH-1 shuttles electrons from NADH, via FMN and iron-sulfur (Fe-S) centers, to quinones in the respiratory chain. The immediate electron acceptor for the enzyme in this species is believed to be ubiquinone. Couples the redox reaction to proton translocation (for every two electrons transferred, four hydrogen ions are translocated across the cytoplasmic membrane), and thus conserves the redox energy in a proton gradient. This subunit may bind ubiquinone. The sequence is that of NADH-quinone oxidoreductase subunit H from Bartonella bacilliformis (strain ATCC 35685 / KC583 / Herrer 020/F12,63).